A 1072-amino-acid polypeptide reads, in one-letter code: DNA-directed RNA polymerase subunit beta (1072 aa).

This sequence belongs to the RNA polymerase beta chain family. In terms of assembly, in plastids the minimal PEP RNA polymerase catalytic core is composed of four subunits: alpha, beta, beta', and beta''. When a (nuclear-encoded) sigma factor is associated with the core the holoenzyme is formed, which can initiate transcription.

The protein resides in the plastid. The protein localises to the chloroplast. The enzyme catalyses RNA(n) + a ribonucleoside 5'-triphosphate = RNA(n+1) + diphosphate. Functionally, DNA-dependent RNA polymerase catalyzes the transcription of DNA into RNA using the four ribonucleoside triphosphates as substrates. This Lemna minor (Common duckweed) protein is DNA-directed RNA polymerase subunit beta.